Consider the following 511-residue polypeptide: MKLKTRILPFESAHYTVVLDQSVAKKLDVRPSDRVLVRFNGKTVVAIANIAKEFSHEHVGVYVNIAKALGISDGDEVEVEATSPPASLQAIRKKLQGLSLESDEIYQVVKDIVDGKLSELELAAFVTAVHFQGMTPSEIYSFTLSMVETGQRLRLKRKPILDKHSLGGVPGDKTSLLVVPIIASLGFTIPKTSSRAITSAAGTADRMEVLAPVNLSIDEIERIVEKTNACLVWGGALNLAPADDIIIRVEYPLGIDPFYIPSILAKKLAVGSTHVVLDVPTGRGTKVKTLEEAKRISQSFFEIARMFGMNLQAVATYAEEPIGHAIGPALEAREALIALRELRPGDLVDKAASLAGTLLEMVGVENGYETAMEALRTGKAEKKLREIIEAQGGDPDVTPEEIPLGDKTYTLYSEEDGFVYYIDNSLLANIGKIAGAPIDKGAGVYIHVKLGEKVRKGDPLLTVYSSSSAKLQAVERILEDSKPVLVGRTAGRRMLLERIQYQPPRQLVLER.

Residues G168, 194-199 (SRAITS), and T203 contribute to the AMP site. D256 acts as the Proton donor in catalysis. Residues S262 and K286 each coordinate AMP.

It belongs to the thymidine/pyrimidine-nucleoside phosphorylase family. Type 2 subfamily.

The catalysed reaction is AMP + phosphate = alpha-D-ribose 1,5-bisphosphate + adenine. It carries out the reaction CMP + phosphate = cytosine + alpha-D-ribose 1,5-bisphosphate. The enzyme catalyses UMP + phosphate = alpha-D-ribose 1,5-bisphosphate + uracil. Functionally, catalyzes the conversion of AMP and phosphate to adenine and ribose 1,5-bisphosphate (R15P). Exhibits phosphorylase activity toward CMP and UMP in addition to AMP. Functions in an archaeal AMP degradation pathway, together with R15P isomerase and RubisCO. The sequence is that of AMP phosphorylase from Thermofilum pendens (strain DSM 2475 / Hrk 5).